The sequence spans 96 residues: Small ribosomal subunit protein bS6 (96 aa).

It belongs to the bacterial ribosomal protein bS6 family.

Binds together with bS18 to 16S ribosomal RNA. The polypeptide is Small ribosomal subunit protein bS6 (Streptococcus thermophilus (strain ATCC BAA-250 / LMG 18311)).